Here is a 130-residue protein sequence, read N- to C-terminus: Small ribosomal subunit protein uS8 (130 aa).

Belongs to the universal ribosomal protein uS8 family. Part of the 30S ribosomal subunit. Contacts proteins S5 and S12.

Functionally, one of the primary rRNA binding proteins, it binds directly to 16S rRNA central domain where it helps coordinate assembly of the platform of the 30S subunit. This Cellvibrio japonicus (strain Ueda107) (Pseudomonas fluorescens subsp. cellulosa) protein is Small ribosomal subunit protein uS8.